The following is an 860-amino-acid chain: Leucine--tRNA ligase (860 aa).

Residues 42–52 (PYPSGRLHMGH) carry the 'HIGH' region motif. The 'KMSKS' region motif lies at 619 to 623 (KMSKS). Lys-622 serves as a coordination point for ATP.

The protein belongs to the class-I aminoacyl-tRNA synthetase family.

The protein resides in the cytoplasm. The catalysed reaction is tRNA(Leu) + L-leucine + ATP = L-leucyl-tRNA(Leu) + AMP + diphosphate. The chain is Leucine--tRNA ligase from Serratia proteamaculans (strain 568).